Here is a 238-residue protein sequence, read N- to C-terminus: Ribonuclease PH (238 aa).

Residues arginine 86 and 124–126 each bind phosphate; that span reads GTR.

Belongs to the RNase PH family. As to quaternary structure, homohexameric ring arranged as a trimer of dimers.

It catalyses the reaction tRNA(n+1) + phosphate = tRNA(n) + a ribonucleoside 5'-diphosphate. Phosphorolytic 3'-5' exoribonuclease that plays an important role in tRNA 3'-end maturation. Removes nucleotide residues following the 3'-CCA terminus of tRNAs; can also add nucleotides to the ends of RNA molecules by using nucleoside diphosphates as substrates, but this may not be physiologically important. Probably plays a role in initiation of 16S rRNA degradation (leading to ribosome degradation) during starvation. This Salmonella agona (strain SL483) protein is Ribonuclease PH.